Reading from the N-terminus, the 372-residue chain is Peptidyl-prolyl cis-trans isomerase D (372 aa).

A PPIase cyclophilin-type domain is found at 14–178 (YFDISIGGKS…KEALIVDCGE (165 aa)). TPR repeat units follow at residues 219–252 (AKAS…INEE), 271–304 (FSLN…GGVK), and 309–342 (AKAF…APND).

It belongs to the cyclophilin-type PPIase family. PPIase D subfamily.

It localises to the cytoplasm. The catalysed reaction is [protein]-peptidylproline (omega=180) = [protein]-peptidylproline (omega=0). In terms of biological role, PPIases accelerate the folding of proteins. It catalyzes the cis-trans isomerization of proline imidic peptide bonds in oligopeptides. The protein is Peptidyl-prolyl cis-trans isomerase D (CPR6) of Gibberella zeae (strain ATCC MYA-4620 / CBS 123657 / FGSC 9075 / NRRL 31084 / PH-1) (Wheat head blight fungus).